Here is a 357-residue protein sequence, read N- to C-terminus: UDP-N-acetylglucosamine--N-acetylmuramyl-(pentapeptide) pyrophosphoryl-undecaprenol N-acetylglucosamine transferase (357 aa).

Residues 11 to 13, Asn-123, Arg-159, Ser-187, Ile-241, 260 to 265, and Gln-286 contribute to the UDP-N-acetyl-alpha-D-glucosamine site; these read TGG and ALTVAE.

This sequence belongs to the glycosyltransferase 28 family. MurG subfamily.

Its subcellular location is the cell inner membrane. It carries out the reaction di-trans,octa-cis-undecaprenyl diphospho-N-acetyl-alpha-D-muramoyl-L-alanyl-D-glutamyl-meso-2,6-diaminopimeloyl-D-alanyl-D-alanine + UDP-N-acetyl-alpha-D-glucosamine = di-trans,octa-cis-undecaprenyl diphospho-[N-acetyl-alpha-D-glucosaminyl-(1-&gt;4)]-N-acetyl-alpha-D-muramoyl-L-alanyl-D-glutamyl-meso-2,6-diaminopimeloyl-D-alanyl-D-alanine + UDP + H(+). It functions in the pathway cell wall biogenesis; peptidoglycan biosynthesis. Cell wall formation. Catalyzes the transfer of a GlcNAc subunit on undecaprenyl-pyrophosphoryl-MurNAc-pentapeptide (lipid intermediate I) to form undecaprenyl-pyrophosphoryl-MurNAc-(pentapeptide)GlcNAc (lipid intermediate II). This chain is UDP-N-acetylglucosamine--N-acetylmuramyl-(pentapeptide) pyrophosphoryl-undecaprenol N-acetylglucosamine transferase, found in Aromatoleum aromaticum (strain DSM 19018 / LMG 30748 / EbN1) (Azoarcus sp. (strain EbN1)).